Here is a 1749-residue protein sequence, read N- to C-terminus: Kinesin-like protein KIF13A (1749 aa).

The 348-residue stretch at 5–352 folds into the Kinesin motor domain; it reads KVKVAVRVRP…LRYADRAKRI (348 aa). Residue 102–109 coordinates ATP; that stretch reads GQTGSGKS. The stretch at 359-431 forms a coiled coil; the sequence is NEDPNAKVIR…QERQRQLESM (73 aa). The region spanning 469 to 519 is the FHA domain; that stretch reads HTRVGADTSQDIQLFGIGIQPEHCEIDIAADGDITLTPKENARSCVNGTLV. Residues 552-775 adopt a coiled-coil conformation; that stretch reads LKDFERETSS…VPEAKRLYGK (224 aa). 2 disordered regions span residues 633 to 652 and 834 to 853; these read QQLS…LAYS and IPER…SGSL. S636 carries the phosphoserine modification. Positions 1086–1126 form a coiled coil; sequence SDALIKRREYLDEQIKKVSNKKEKTEDDMEREARLVEQWVG. Position 1274 is a phosphoserine (S1274). Residues 1370–1383 show a composition bias toward polar residues; it reads LSTPNVHNVSSSRP. Disordered stretches follow at residues 1370–1402 and 1417–1436; these read LSTP…QLDV and TLPR…ENPH. Positions 1421 to 1430 are enriched in basic and acidic residues; the sequence is DSPRRSKEGC. Residues S1441, S1477, S1481, S1524, S1600, and S1650 each carry the phosphoserine modification. Positions 1475–1499 form a coiled coil; sequence LLSQEDSEEEENELEALSRKLMLTQ. 2 disordered regions span residues 1584-1665 and 1698-1749; these read CAEP…GHQA and DFDG…TATR. The span at 1719–1741 shows a compositional bias: basic and acidic residues; it reads ETDHKGIPERPPDADRLHPKIEN.

This sequence belongs to the TRAFAC class myosin-kinesin ATPase superfamily. Kinesin family. In terms of assembly, interacts with AP1G1 and AP1G2. Interacts with ZFYVE26. Interacts with AP2B1.

It is found in the golgi apparatus membrane. It localises to the cytoplasm. Its subcellular location is the cytoskeleton. The protein resides in the microtubule organizing center. The protein localises to the centrosome. It is found in the midbody. It localises to the endosome membrane. Its function is as follows. Plus end-directed microtubule-dependent motor protein involved in intracellular transport and regulating various processes such as mannose-6-phosphate receptor (M6PR) transport to the plasma membrane, endosomal sorting during melanosome biogenesis and cytokinesis. During melanosome maturation, required for delivering melanogenic enzymes from recycling endosomes to nascent melanosomes by creating peripheral recycling endosomal subdomains in melanocytes. Also required for the abscission step in cytokinesis: mediates translocation of ZFYVE26, and possibly TTC19, to the midbody during cytokinesis. Mediates the transport of M6PR-containing vesicles from trans-Golgi network to the plasma membrane via direct interaction with the AP-1 complex. This chain is Kinesin-like protein KIF13A (Kif13a), found in Mus musculus (Mouse).